The primary structure comprises 107 residues: Integration host factor subunit beta (107 aa).

Basic and acidic residues predominate over residues 82–101; it reads PGKELRERVDRRAGEPLKAE. The tract at residues 82–107 is disordered; the sequence is PGKELRERVDRRAGEPLKAEDPDDDL.

Belongs to the bacterial histone-like protein family. Heterodimer of an alpha and a beta chain.

Functionally, this protein is one of the two subunits of integration host factor, a specific DNA-binding protein that functions in genetic recombination as well as in transcriptional and translational control. This chain is Integration host factor subunit beta, found in Paraburkholderia xenovorans (strain LB400).